Consider the following 480-residue polypeptide: Carboxy-terminal processing protease CtpB (480 aa).

The first 23 residues, 1 to 23 (MNQKIMAVIAAGSMLFGGAGVYA), serve as a signal peptide directing secretion. Residues 92 to 182 (SVYMDKQTAK…SSVSMKIQRP (91 aa)) form the PDZ domain. A peptide binding region spans residues 113 to 116 (GIGA). Residue Ser-309 is the Nucleophile of the active site. Active-site charge relay system residues include Lys-334 and Gln-338.

Belongs to the peptidase S41A family. As to quaternary structure, homodimer. Post-translationally, is cleaved by SpoIVB in vitro and in vivo but this cleavage does not appear to be necessary for CtpB activation. CtpB can also cleave itself in vivo.

The protein resides in the forespore intermembrane space. It carries out the reaction The enzyme shows specific recognition of a C-terminal tripeptide, Xaa-Yaa-Zaa, in which Xaa is preferably Ala or Leu, Yaa is preferably Ala or Tyr, and Zaa is preferably Ala, but then cleaves at a variable distance from the C-terminus. A typical cleavage is -Ala-Ala-|-Arg-Ala-Ala-Lys-Glu-Asn-Tyr-Ala-Leu-Ala-Ala.. With respect to regulation, activated by peptide binding to the PDZ domain. In terms of biological role, involved in the signal transduction pathway leading to the proteolytic activation of the mother cell transcription factor pro-sigma-K during sporulation. The signaling serine protease CtpB triggers pro-sigma-K processing by cleaving the pre-processed regulatory protein SpoIVFA and is necessary for the proper timing of sigma-K activation. In Bacillus subtilis (strain 168), this protein is Carboxy-terminal processing protease CtpB (ctpB).